A 347-amino-acid chain; its full sequence is High mobility group protein 20A (347 aa).

2 stretches are compositionally biased toward polar residues: residues 1 to 10 (MENLMTSSTL) and 40 to 49 (SGATSSTNNP). Disordered regions lie at residues 1–113 (MENL…YVRF) and 179–211 (FSRK…TEVK). Residues 55-66 (LSQGQLLQSESS) show a composition bias toward low complexity. Positions 72-82 (NEQRHEDEQRS) are enriched in basic and acidic residues. Basic residues predominate over residues 83–96 (KRGGWSKGRKRKKP). Positions 103-171 (PKSPLTGYVR…RYMKELEQYQ (69 aa)) form a DNA-binding region, HMG box. Residue Ser-105 is modified to Phosphoserine. Over residues 182 to 211 (KTQDRQKGKSHRQDAARQATHDHEKETEVK) the composition is skewed to basic and acidic residues. The stretch at 229-273 (SKAREAELRQLRKSNMEFEERNAALQKHVESMRTAVEKLEVDVIQ) forms a coiled coil.

In terms of assembly, interacts with DTNB. As to expression, ubiquitous.

The protein localises to the nucleus. In terms of biological role, plays a role in neuronal differentiation as chromatin-associated protein. Acts as inhibitor of HMG20B. Overcomes the repressive effects of the neuronal silencer REST and induces the activation of neuronal-specific genes. Involved in the recruitment of the histone methyltransferase KMT2A/MLL1 and consequent increased methylation of histone H3 lysine 4. In Homo sapiens (Human), this protein is High mobility group protein 20A (HMG20A).